Consider the following 198-residue polypeptide: Small ribosomal subunit protein eS1 (198 aa).

It belongs to the eukaryotic ribosomal protein eS1 family.

The sequence is that of Small ribosomal subunit protein eS1 from Methanosphaerula palustris (strain ATCC BAA-1556 / DSM 19958 / E1-9c).